A 371-amino-acid chain; its full sequence is Peptide chain release factor 2 (371 aa).

Residue Q253 is modified to N5-methylglutamine.

Belongs to the prokaryotic/mitochondrial release factor family. Post-translationally, methylated by PrmC. Methylation increases the termination efficiency of RF2.

The protein localises to the cytoplasm. Functionally, peptide chain release factor 2 directs the termination of translation in response to the peptide chain termination codons UGA and UAA. The polypeptide is Peptide chain release factor 2 (Mycobacterium sp. (strain KMS)).